Reading from the N-terminus, the 78-residue chain is Large ribosomal subunit protein eL20 (78 aa).

The protein belongs to the eukaryotic ribosomal protein eL20 family. In terms of assembly, part of the 50S ribosomal subunit. Binds 23S rRNA.

The polypeptide is Large ribosomal subunit protein eL20 (Pyrobaculum aerophilum (strain ATCC 51768 / DSM 7523 / JCM 9630 / CIP 104966 / NBRC 100827 / IM2)).